Consider the following 792-residue polypeptide: Xaa-Pro dipeptidyl-peptidase (792 aa).

Active-site charge relay system residues include S363, D482, and H513.

The protein belongs to the peptidase S15 family. As to quaternary structure, homodimer.

It localises to the cytoplasm. It catalyses the reaction Hydrolyzes Xaa-Pro-|- bonds to release unblocked, N-terminal dipeptides from substrates including Ala-Pro-|-p-nitroanilide and (sequentially) Tyr-Pro-|-Phe-Pro-|-Gly-Pro-|-Ile.. Its function is as follows. Removes N-terminal dipeptides sequentially from polypeptides having unsubstituted N-termini provided that the penultimate residue is proline. The sequence is that of Xaa-Pro dipeptidyl-peptidase from Lactobacillus delbrueckii subsp. bulgaricus (strain ATCC 11842 / DSM 20081 / BCRC 10696 / JCM 1002 / NBRC 13953 / NCIMB 11778 / NCTC 12712 / WDCM 00102 / Lb 14).